A 146-amino-acid polypeptide reads, in one-letter code: ATP synthase epsilon chain (146 aa).

Residues 92–116 (ISVDQARRDRDSLRKKLNEHERSEQ) are compositionally biased toward basic and acidic residues. A disordered region spans residues 92-120 (ISVDQARRDRDSLRKKLNEHERSEQDPEV).

Belongs to the ATPase epsilon chain family. F-type ATPases have 2 components, CF(1) - the catalytic core - and CF(0) - the membrane proton channel. CF(1) has five subunits: alpha(3), beta(3), gamma(1), delta(1), epsilon(1). CF(0) has three main subunits: a, b and c.

It localises to the cell membrane. Functionally, produces ATP from ADP in the presence of a proton gradient across the membrane. The sequence is that of ATP synthase epsilon chain from Cutibacterium acnes (strain DSM 16379 / KPA171202) (Propionibacterium acnes).